A 20-amino-acid polypeptide reads, in one-letter code: Cathepsin L1 (20 aa).

Over residues 1–10 (AVPDKIDPRE) the composition is skewed to basic and acidic residues. Positions 1–20 (AVPDKIDPRESGYVTGVKDQ) are disordered.

Belongs to the peptidase C1 family. As to quaternary structure, dimer of a heavy and a light chain linked by disulfide bonds.

Its subcellular location is the lysosome. The enzyme catalyses Specificity close to that of papain. As compared to cathepsin B, cathepsin L exhibits higher activity toward protein substrates, but has little activity on Z-Arg-Arg-NHMec, and no peptidyl-dipeptidase activity.. In terms of biological role, thiol protease that assists the parasite in burrowing through the gut wall and liver of its mammalian host. The sequence is that of Cathepsin L1 from Fasciola hepatica (Liver fluke).